A 441-amino-acid polypeptide reads, in one-letter code: Ribulose bisphosphate carboxylase large chain (441 aa).

Asn89 and Thr139 together coordinate substrate. The Proton acceptor role is filled by Lys141. Residue Lys143 coordinates substrate. The Mg(2+) site is built by Lys167, Asp169, and Glu170. Lys167 is subject to N6-carboxylysine. The active-site Proton acceptor is the His260. Substrate is bound by residues Arg261, His293, and Ser345.

It belongs to the RuBisCO large chain family. Type I subfamily. As to quaternary structure, heterohexadecamer of 8 large chains and 8 small chains; disulfide-linked. The disulfide link is formed within the large subunit homodimers. It depends on Mg(2+) as a cofactor. In terms of processing, the disulfide bond which can form in the large chain dimeric partners within the hexadecamer appears to be associated with oxidative stress and protein turnover.

It is found in the plastid. The protein resides in the chloroplast. It carries out the reaction 2 (2R)-3-phosphoglycerate + 2 H(+) = D-ribulose 1,5-bisphosphate + CO2 + H2O. The catalysed reaction is D-ribulose 1,5-bisphosphate + O2 = 2-phosphoglycolate + (2R)-3-phosphoglycerate + 2 H(+). In terms of biological role, ruBisCO catalyzes two reactions: the carboxylation of D-ribulose 1,5-bisphosphate, the primary event in carbon dioxide fixation, as well as the oxidative fragmentation of the pentose substrate in the photorespiration process. Both reactions occur simultaneously and in competition at the same active site. The chain is Ribulose bisphosphate carboxylase large chain from Coriandrum sativum (Coriander).